A 234-amino-acid chain; its full sequence is uncharacterized protein (234 aa).

L-glutamine is bound at residue 68-70 (GES). The active-site Nucleophile is C101. L-glutamine-binding positions include R131 and 167-168 (IR). Active-site charge relay system residues include H208 and E210.

The protein belongs to the glutaminase PdxT/SNO family.

Its subcellular location is the cytoplasm. The catalysed reaction is L-glutamine + H2O = L-glutamate + NH4(+). This is an uncharacterized protein from Schizosaccharomyces pombe (strain 972 / ATCC 24843) (Fission yeast).